Consider the following 573-residue polypeptide: AP-4 complex accessory subunit Tepsin (573 aa).

Residues 8–141 (RDRLSFLHRL…FSDAVPQPPS (134 aa)) form the ENTH domain. Disordered regions lie at residues 136 to 155 (VPQPPSQPPQIPPPAGMGAQ) and 194 to 311 (NAVR…NDCQ). Residues 137 to 150 (PQPPSQPPQIPPPA) are compositionally biased toward pro residues. A compositionally biased stretch (polar residues) spans 217-229 (PAVTPSASHTHPN). The span at 260-293 (SSPSSQNSSCTSNLSRASDSGSRSGSDSHSGTSR) shows a compositional bias: low complexity. Residues 294-303 (EPGDLAERAE) show a composition bias toward basic and acidic residues. Position 400 is a phosphoserine (Ser400). A disordered region spans residues 497 to 526 (CSSEQGTESEQRLENTDTPEDSSSPLPWSP). The interaction with AP4B1 stretch occupies residues 526 to 536 (PNSLFAGMELV). The interval 563–573 (SEPSAFAFLNM) is interaction with AP4E1.

In terms of assembly, interacts with AP4B1 and AP4E1; the interaction is direct and mediates the association of TEPSIN with the adapter-like complex 4 (AP-4), a heterotetramer composed of AP4B1, AP4E1, AP4M1 and AP4S1.

It is found in the golgi apparatus. The protein localises to the trans-Golgi network membrane. The protein resides in the cytoplasmic vesicle. Its subcellular location is the cytoplasm. It localises to the cytosol. In terms of biological role, associates with the adapter-like complex 4 (AP-4) and may therefore play a role in vesicular trafficking of proteins at the trans-Golgi network. In Mus musculus (Mouse), this protein is AP-4 complex accessory subunit Tepsin.